A 190-amino-acid chain; its full sequence is Small ribosomal subunit protein uS5 (190 aa).

In terms of domain architecture, S5 DRBM spans 22–85; it reads FVDKLVHINR…ESAKRNLTRV (64 aa).

Belongs to the universal ribosomal protein uS5 family. Part of the 30S ribosomal subunit. Contacts proteins S4 and S8.

Its function is as follows. With S4 and S12 plays an important role in translational accuracy. Located at the back of the 30S subunit body where it stabilizes the conformation of the head with respect to the body. This Rhodopseudomonas palustris (strain BisB18) protein is Small ribosomal subunit protein uS5.